Reading from the N-terminus, the 74-residue chain is Acyl carrier protein (74 aa).

The 74-residue stretch at 1-74 (MFEKVRKIIA…DVVEYIKNNS (74 aa)) folds into the Carrier domain. O-(pantetheine 4'-phosphoryl)serine is present on S34.

It belongs to the acyl carrier protein (ACP) family. 4'-phosphopantetheine is transferred from CoA to a specific serine of apo-ACP by AcpS. This modification is essential for activity because fatty acids are bound in thioester linkage to the sulfhydryl of the prosthetic group.

Its subcellular location is the cytoplasm. The protein operates within lipid metabolism; fatty acid biosynthesis. In terms of biological role, carrier of the growing fatty acid chain in fatty acid biosynthesis. The protein is Acyl carrier protein of Acetivibrio thermocellus (strain ATCC 27405 / DSM 1237 / JCM 9322 / NBRC 103400 / NCIMB 10682 / NRRL B-4536 / VPI 7372) (Clostridium thermocellum).